We begin with the raw amino-acid sequence, 593 residues long: Probable serine/threonine-protein kinase fhkA (593 aa).

A disordered region spans residues 1–24 (MSQTNYIPSTPNKSTPPSELSSTP). The FHA domain maps to 54–111 (ITIGRSKTCNIVVPELIVSGKHCIITRADAIENGNTNYGLLMIQDQSTNGTFINGKLI). In terms of domain architecture, Protein kinase spans 180–472 (YDFIKELGSG…VEQALNHPWI (293 aa)). ATP contacts are provided by residues 186-194 (LGSGNFSVV) and K209. Residue D307 is the Proton acceptor of the active site.

Belongs to the protein kinase superfamily. CAMK Ser/Thr protein kinase family. CHK2 subfamily.

It carries out the reaction L-seryl-[protein] + ATP = O-phospho-L-seryl-[protein] + ADP + H(+). The catalysed reaction is L-threonyl-[protein] + ATP = O-phospho-L-threonyl-[protein] + ADP + H(+). The polypeptide is Probable serine/threonine-protein kinase fhkA (fhkA) (Dictyostelium discoideum (Social amoeba)).